The chain runs to 57 residues: MAVQKSRKTPSRRGMRRSHDALSTTAITVDETTGELHRRHHVTADGYYKGKKVIQDK.

Basic residues predominate over residues 1–16 (MAVQKSRKTPSRRGMR). The segment at 1-37 (MAVQKSRKTPSRRGMRRSHDALSTTAITVDETTGELH) is disordered. Positions 21–31 (ALSTTAITVDE) are enriched in polar residues.

It belongs to the bacterial ribosomal protein bL32 family.

The chain is Large ribosomal subunit protein bL32 from Hydrogenovibrio crunogenus (strain DSM 25203 / XCL-2) (Thiomicrospira crunogena).